A 381-amino-acid chain; its full sequence is L-lactate dehydrogenase A-like 6B (381 aa).

Residues 101–106 (DLDEDK) and R148 contribute to the NAD(+) site. Substrate contacts are provided by R155, N187, and R218. NAD(+) is bound at residue N187. H242 serves as the catalytic Proton acceptor. A substrate-binding site is contributed by T297.

The protein belongs to the LDH/MDH superfamily. LDH family. As to expression, testis specific.

The enzyme catalyses (S)-lactate + NAD(+) = pyruvate + NADH + H(+). The protein operates within fermentation; pyruvate fermentation to lactate; (S)-lactate from pyruvate: step 1/1. The polypeptide is L-lactate dehydrogenase A-like 6B (LDHAL6B) (Homo sapiens (Human)).